The chain runs to 458 residues: Bifunctional protein GlmU (458 aa).

Residues 1-232 (MTSSLSVIIL…TFEIEGVNNR (232 aa)) are pyrophosphorylase. Residues 10-13 (LAAG), K24, Q79, 84-85 (GT), 106-108 (YGD), G142, E157, N172, and N230 contribute to the UDP-N-acetyl-alpha-D-glucosamine site. A Mg(2+)-binding site is contributed by D108. N230 contacts Mg(2+). The segment at 233–253 (QQLASLERTWQGKLVADLQEA) is linker. The segment at 254–458 (GVQFADPTRV…KNDFKRPTKK (205 aa)) is N-acetyltransferase. UDP-N-acetyl-alpha-D-glucosamine is bound by residues R336 and K354. H366 (proton acceptor) is an active-site residue. Y369 and N380 together coordinate UDP-N-acetyl-alpha-D-glucosamine. Acetyl-CoA-binding positions include A383, 389–390 (NY), S408, A426, and R443.

This sequence in the N-terminal section; belongs to the N-acetylglucosamine-1-phosphate uridyltransferase family. In the C-terminal section; belongs to the transferase hexapeptide repeat family. As to quaternary structure, homotrimer. Mg(2+) is required as a cofactor.

It is found in the cytoplasm. It catalyses the reaction alpha-D-glucosamine 1-phosphate + acetyl-CoA = N-acetyl-alpha-D-glucosamine 1-phosphate + CoA + H(+). The catalysed reaction is N-acetyl-alpha-D-glucosamine 1-phosphate + UTP + H(+) = UDP-N-acetyl-alpha-D-glucosamine + diphosphate. Its pathway is nucleotide-sugar biosynthesis; UDP-N-acetyl-alpha-D-glucosamine biosynthesis; N-acetyl-alpha-D-glucosamine 1-phosphate from alpha-D-glucosamine 6-phosphate (route II): step 2/2. The protein operates within nucleotide-sugar biosynthesis; UDP-N-acetyl-alpha-D-glucosamine biosynthesis; UDP-N-acetyl-alpha-D-glucosamine from N-acetyl-alpha-D-glucosamine 1-phosphate: step 1/1. It participates in bacterial outer membrane biogenesis; LPS lipid A biosynthesis. Its function is as follows. Catalyzes the last two sequential reactions in the de novo biosynthetic pathway for UDP-N-acetylglucosamine (UDP-GlcNAc). The C-terminal domain catalyzes the transfer of acetyl group from acetyl coenzyme A to glucosamine-1-phosphate (GlcN-1-P) to produce N-acetylglucosamine-1-phosphate (GlcNAc-1-P), which is converted into UDP-GlcNAc by the transfer of uridine 5-monophosphate (from uridine 5-triphosphate), a reaction catalyzed by the N-terminal domain. The protein is Bifunctional protein GlmU of Psychrobacter cryohalolentis (strain ATCC BAA-1226 / DSM 17306 / VKM B-2378 / K5).